Here is a 110-residue protein sequence, read N- to C-terminus: UPF0060 membrane protein Bpet0062 (110 aa).

Transmembrane regions (helical) follow at residues 7 to 27 (LGLF…PYLW), 33 to 53 (SAWL…LLTL), 63 to 83 (AAYG…VDGV), and 86 to 106 (ATTD…IMAG).

It belongs to the UPF0060 family.

It is found in the cell inner membrane. The chain is UPF0060 membrane protein Bpet0062 from Bordetella petrii (strain ATCC BAA-461 / DSM 12804 / CCUG 43448).